We begin with the raw amino-acid sequence, 752 residues long: Polyribonucleotide nucleotidyltransferase (752 aa).

Asp519 and Asp525 together coordinate Mg(2+). The KH domain occupies 585 to 644 (PRVIAVKIPVDKIGEVIGPKGKMINQIQEDTGADISIEDDGTVYIGATNGPSADAARSAI). The S1 motif domain occupies 656 to 728 (GERYLGTVVK…DRGKLSLSPV (73 aa)). Residues 727–752 (PVVAEEEGAEGAERAHATEPAEGAEI) form a disordered region.

Belongs to the polyribonucleotide nucleotidyltransferase family. Mg(2+) is required as a cofactor.

The protein resides in the cytoplasm. The enzyme catalyses RNA(n+1) + phosphate = RNA(n) + a ribonucleoside 5'-diphosphate. Its function is as follows. Involved in mRNA degradation. Catalyzes the phosphorolysis of single-stranded polyribonucleotides processively in the 3'- to 5'-direction. This chain is Polyribonucleotide nucleotidyltransferase, found in Pseudarthrobacter chlorophenolicus (strain ATCC 700700 / DSM 12829 / CIP 107037 / JCM 12360 / KCTC 9906 / NCIMB 13794 / A6) (Arthrobacter chlorophenolicus).